A 127-amino-acid chain; its full sequence is MQDDPRYRVEVEVSPRFLAHQSTPEEGRYAFAYSIRIQNAGAVPARLIARHWKITDANGRTEQVDGEGVVGEQPRLRPGEAFHYTSGVLLETEQGQMQGYYDMVADDGTEFTAPIAAFVLSVPRTLH.

Positions 3 to 127 (DDPRYRVEVE…FVLSVPRTLH (125 aa)) constitute an ApaG domain.

The protein is Protein ApaG of Xanthomonas campestris pv. campestris (strain 8004).